A 310-amino-acid chain; its full sequence is Pantothenate kinase (310 aa).

95–102 (GSVAVGKS) provides a ligand contact to ATP.

The protein belongs to the prokaryotic pantothenate kinase family.

It is found in the cytoplasm. The catalysed reaction is (R)-pantothenate + ATP = (R)-4'-phosphopantothenate + ADP + H(+). The protein operates within cofactor biosynthesis; coenzyme A biosynthesis; CoA from (R)-pantothenate: step 1/5. The polypeptide is Pantothenate kinase (Rhodococcus erythropolis (strain PR4 / NBRC 100887)).